The following is a 311-amino-acid chain: uncharacterized protein (311 aa).

This is an uncharacterized protein from Bacillus subtilis (strain 168).